The chain runs to 117 residues: Large ribosomal subunit protein bL20 (117 aa).

It belongs to the bacterial ribosomal protein bL20 family.

In terms of biological role, binds directly to 23S ribosomal RNA and is necessary for the in vitro assembly process of the 50S ribosomal subunit. It is not involved in the protein synthesizing functions of that subunit. The sequence is that of Large ribosomal subunit protein bL20 from Vibrio atlanticus (strain LGP32) (Vibrio splendidus (strain Mel32)).